The following is a 620-amino-acid chain: 1-deoxy-D-xylulose-5-phosphate synthase (620 aa).

Residues His-80 and 121–123 each bind thiamine diphosphate; that span reads GHS. Asp-152 contributes to the Mg(2+) binding site. Thiamine diphosphate contacts are provided by residues 153-154, Asn-181, Tyr-288, and Glu-370; that span reads GA. Position 181 (Asn-181) interacts with Mg(2+).

This sequence belongs to the transketolase family. DXPS subfamily. Homodimer. Mg(2+) is required as a cofactor. Thiamine diphosphate serves as cofactor.

The catalysed reaction is D-glyceraldehyde 3-phosphate + pyruvate + H(+) = 1-deoxy-D-xylulose 5-phosphate + CO2. Its pathway is metabolic intermediate biosynthesis; 1-deoxy-D-xylulose 5-phosphate biosynthesis; 1-deoxy-D-xylulose 5-phosphate from D-glyceraldehyde 3-phosphate and pyruvate: step 1/1. Functionally, catalyzes the acyloin condensation reaction between C atoms 2 and 3 of pyruvate and glyceraldehyde 3-phosphate to yield 1-deoxy-D-xylulose-5-phosphate (DXP). The protein is 1-deoxy-D-xylulose-5-phosphate synthase of Sodalis glossinidius (strain morsitans).